A 190-amino-acid chain; its full sequence is Threonylcarbamoyl-AMP synthase (190 aa).

One can recognise a YrdC-like domain in the interval 8–190 (RFRIRQCAAR…DAESGAVIRA (183 aa)).

The protein belongs to the SUA5 family. TsaC subfamily.

The protein resides in the cytoplasm. The enzyme catalyses L-threonine + hydrogencarbonate + ATP = L-threonylcarbamoyladenylate + diphosphate + H2O. Required for the formation of a threonylcarbamoyl group on adenosine at position 37 (t(6)A37) in tRNAs that read codons beginning with adenine. Catalyzes the conversion of L-threonine, HCO(3)(-)/CO(2) and ATP to give threonylcarbamoyl-AMP (TC-AMP) as the acyladenylate intermediate, with the release of diphosphate. The polypeptide is Threonylcarbamoyl-AMP synthase (Alkalilimnicola ehrlichii (strain ATCC BAA-1101 / DSM 17681 / MLHE-1)).